The following is a 583-amino-acid chain: Phytoene desaturase (583 aa).

An N-terminal signal peptide occupies residues 1–20; sequence MAPPKHVIIIGAGAGGTATA. Residues 531–551 traverse the membrane as a helical segment; that stretch reads IIWFLLIALFAATLVLFIAFP.

Belongs to the carotenoid/retinoid oxidoreductase family. The cofactor is NAD(+).

It localises to the membrane. The catalysed reaction is 15-cis-phytoene + 5 A = all-trans-3,4-didehydrolycopene + 5 AH2. It functions in the pathway carotenoid biosynthesis; lycopene biosynthesis. Phytoene desaturase involved in the carotenoid biosynthesis pathway. Converts phytoene into 3,4-didehydrolycopene via the intermediary of phytofluene, zeta-carotene, neurosporene and lycopene, by introducing up to five double bonds into phytoene. The sequence is that of Phytoene desaturase (carB) from Phycomyces blakesleeanus (strain ATCC 8743b / DSM 1359 / FGSC 10004 / NBRC 33097 / NRRL 1555).